The following is a 523-amino-acid chain: MTNIHNHKILILDFGSQYTQLIARRVREIGVYCELWAWDVTEQQIREFAPTGIILSGGPESTTEENSPRAPEYVFNAGVPVLGVCYGMQTMAMQLGGLTETSDHREFGYASVSLENSTALFANLNDNSTASEPKLDVWMSHGDKVTRLPENFKVTGTTLTCPIAAMSDENRRFYGVQFHPEVTHTKKGLELLTNFVVNICGCETKWTAENIIEDAVARIKEQVGNDEVILGLSGGVDSSVVALLLHRAIGKNLHCVFVDNGLLRLHEGDQVMEMFGDKFGLNITRVDAESRFLGELAGVSDPEAKRKIIGKVFVDVFDDESKKLTNVKWLAQGTIYPDVIESAASKTGKAHVIKSHHNVGGLPDYMKLGLVEPLRELFKDEVRKIGLALGLPAEMINRHPFPGPGLGVRVLGEVKKEYCDLLRRADAIFIEELRNSGWYEKTSQAFSVFLPVKSVGVMGDGRKYDWVISLRAVETIDFMTAHWAHLPYDLLGKVSNRIINEVNGISRVVYDISGKPPATIEWE.

Positions lysine 8–lysine 205 constitute a Glutamine amidotransferase type-1 domain. The active-site Nucleophile is the cysteine 85. Active-site residues include histidine 179 and glutamate 181. Positions tryptophan 206–arginine 398 constitute a GMPS ATP-PPase domain. Serine 233 to serine 239 contributes to the ATP binding site.

Homodimer.

The enzyme catalyses XMP + L-glutamine + ATP + H2O = GMP + L-glutamate + AMP + diphosphate + 2 H(+). The protein operates within purine metabolism; GMP biosynthesis; GMP from XMP (L-Gln route): step 1/1. Catalyzes the synthesis of GMP from XMP. The chain is GMP synthase [glutamine-hydrolyzing] from Haemophilus influenzae (strain PittGG).